A 176-amino-acid polypeptide reads, in one-letter code: ATP-dependent protease subunit HslV (176 aa).

The active site involves T2. Na(+)-binding residues include G157, C160, and T163.

The protein belongs to the peptidase T1B family. HslV subfamily. A double ring-shaped homohexamer of HslV is capped on each side by a ring-shaped HslU homohexamer. The assembly of the HslU/HslV complex is dependent on binding of ATP.

Its subcellular location is the cytoplasm. It carries out the reaction ATP-dependent cleavage of peptide bonds with broad specificity.. Its activity is regulated as follows. Allosterically activated by HslU binding. In terms of biological role, protease subunit of a proteasome-like degradation complex believed to be a general protein degrading machinery. In Klebsiella pneumoniae (strain 342), this protein is ATP-dependent protease subunit HslV.